A 227-amino-acid chain; its full sequence is Cytochrome c oxidase subunit 2 (227 aa).

At 1–14 (MAHPVQLGLQDATS) the chain is on the mitochondrial intermembrane side. The chain crosses the membrane as a helical span at residues 15–45 (PVMEELITFHDYALMTISLISFLVLYALFST). The Mitochondrial matrix portion of the chain corresponds to 46–59 (LTTKLTNTNITDAQ). Residues 60–87 (EMETTWTILPAVILILIALPSLRILYLT) traverse the membrane as a helical segment. Residues 88–227 (DEINNPSFTI…IFEMGPVFTL (140 aa)) lie on the Mitochondrial intermembrane side of the membrane. Residues His-161, Cys-196, Glu-198, Cys-200, His-204, and Met-207 each contribute to the Cu cation site. Glu-198 is a binding site for Mg(2+).

It belongs to the cytochrome c oxidase subunit 2 family. Component of the cytochrome c oxidase (complex IV, CIV), a multisubunit enzyme composed of 14 subunits. The complex is composed of a catalytic core of 3 subunits MT-CO1, MT-CO2 and MT-CO3, encoded in the mitochondrial DNA, and 11 supernumerary subunits COX4I, COX5A, COX5B, COX6A, COX6B, COX6C, COX7A, COX7B, COX7C, COX8 and NDUFA4, which are encoded in the nuclear genome. The complex exists as a monomer or a dimer and forms supercomplexes (SCs) in the inner mitochondrial membrane with NADH-ubiquinone oxidoreductase (complex I, CI) and ubiquinol-cytochrome c oxidoreductase (cytochrome b-c1 complex, complex III, CIII), resulting in different assemblies (supercomplex SCI(1)III(2)IV(1) and megacomplex MCI(2)III(2)IV(2)). Found in a complex with TMEM177, COA6, COX18, COX20, SCO1 and SCO2. Interacts with TMEM177 in a COX20-dependent manner. Interacts with COX20. Interacts with COX16. Cu cation serves as cofactor.

Its subcellular location is the mitochondrion inner membrane. It carries out the reaction 4 Fe(II)-[cytochrome c] + O2 + 8 H(+)(in) = 4 Fe(III)-[cytochrome c] + 2 H2O + 4 H(+)(out). Functionally, component of the cytochrome c oxidase, the last enzyme in the mitochondrial electron transport chain which drives oxidative phosphorylation. The respiratory chain contains 3 multisubunit complexes succinate dehydrogenase (complex II, CII), ubiquinol-cytochrome c oxidoreductase (cytochrome b-c1 complex, complex III, CIII) and cytochrome c oxidase (complex IV, CIV), that cooperate to transfer electrons derived from NADH and succinate to molecular oxygen, creating an electrochemical gradient over the inner membrane that drives transmembrane transport and the ATP synthase. Cytochrome c oxidase is the component of the respiratory chain that catalyzes the reduction of oxygen to water. Electrons originating from reduced cytochrome c in the intermembrane space (IMS) are transferred via the dinuclear copper A center (CU(A)) of subunit 2 and heme A of subunit 1 to the active site in subunit 1, a binuclear center (BNC) formed by heme A3 and copper B (CU(B)). The BNC reduces molecular oxygen to 2 water molecules using 4 electrons from cytochrome c in the IMS and 4 protons from the mitochondrial matrix. This Chlorocebus aethiops (Green monkey) protein is Cytochrome c oxidase subunit 2 (MT-CO2).